The primary structure comprises 107 residues: Phosphoribosyl-ATP pyrophosphatase (107 aa).

It belongs to the PRA-PH family.

It is found in the cytoplasm. It catalyses the reaction 1-(5-phospho-beta-D-ribosyl)-ATP + H2O = 1-(5-phospho-beta-D-ribosyl)-5'-AMP + diphosphate + H(+). The protein operates within amino-acid biosynthesis; L-histidine biosynthesis; L-histidine from 5-phospho-alpha-D-ribose 1-diphosphate: step 2/9. This is Phosphoribosyl-ATP pyrophosphatase from Caulobacter sp. (strain K31).